The primary structure comprises 756 residues: 1,4-alpha-glucan branching enzyme GlgB (756 aa).

Aspartate 431 acts as the Nucleophile in catalysis. Glutamate 484 (proton donor) is an active-site residue.

This sequence belongs to the glycosyl hydrolase 13 family. GlgB subfamily. Monomer.

The catalysed reaction is Transfers a segment of a (1-&gt;4)-alpha-D-glucan chain to a primary hydroxy group in a similar glucan chain.. It participates in glycan biosynthesis; glycogen biosynthesis. Functionally, catalyzes the formation of the alpha-1,6-glucosidic linkages in glycogen by scission of a 1,4-alpha-linked oligosaccharide from growing alpha-1,4-glucan chains and the subsequent attachment of the oligosaccharide to the alpha-1,6 position. In Prochlorococcus marinus (strain MIT 9303), this protein is 1,4-alpha-glucan branching enzyme GlgB.